Consider the following 309-residue polypeptide: tRNA-dihydrouridine(16) synthase (309 aa).

FMN contacts are provided by residues 7–9 and Q68; that span reads PME. C98 (proton donor) is an active-site residue. Residues R137, N198, and 220–221 each bind FMN; that span reads GC.

The protein belongs to the Dus family. DusC subfamily. FMN serves as cofactor.

It catalyses the reaction 5,6-dihydrouridine(16) in tRNA + NADP(+) = uridine(16) in tRNA + NADPH + H(+). It carries out the reaction 5,6-dihydrouridine(16) in tRNA + NAD(+) = uridine(16) in tRNA + NADH + H(+). Catalyzes the synthesis of 5,6-dihydrouridine (D), a modified base found in the D-loop of most tRNAs, via the reduction of the C5-C6 double bond in target uridines. Specifically modifies U16 in tRNAs. The polypeptide is tRNA-dihydrouridine(16) synthase (Azotobacter vinelandii).